We begin with the raw amino-acid sequence, 137 residues long: Bacteriohemerythrin (137 aa).

Residues histidine 21, histidine 53, glutamate 57, histidine 72, histidine 76, histidine 112, and aspartate 117 each coordinate Fe cation.

Belongs to the hemerythrin family. In terms of assembly, monomer.

In terms of biological role, oxygen-binding protein. May be involved in a storage mechanism or for delivery to oxygen-requiring enzymes. The oxygen-binding site contains two iron atoms. The chain is Bacteriohemerythrin from Ralstonia nicotianae (strain ATCC BAA-1114 / GMI1000) (Ralstonia solanacearum).